A 263-amino-acid polypeptide reads, in one-letter code: L-erythrulose-1-phosphate isomerase (263 aa).

Histidine 106 acts as the Electrophile in catalysis. Glutamate 178 acts as the Proton acceptor in catalysis.

It belongs to the triosephosphate isomerase family.

The enzyme catalyses L-erythrulose 1-phosphate = D-erythrulose 4-phosphate. It functions in the pathway carbohydrate metabolism; L-threitol degradation. In terms of biological role, catalyzes the isomerization of L-erythrulose-1P to D-erythrulose-4P. Involved in the degradation pathway of L-threitol, that allows M.smegmatis to grow on this compound as the sole carbon source. The polypeptide is L-erythrulose-1-phosphate isomerase (Mycolicibacterium smegmatis (strain ATCC 700084 / mc(2)155) (Mycobacterium smegmatis)).